Reading from the N-terminus, the 461-residue chain is Cysteine--tRNA ligase (461 aa).

Residue C28 coordinates Zn(2+). The 'HIGH' region motif lies at 30–40 (ITVYDLCHIGH). Residues C209, H234, and E238 each coordinate Zn(2+). The 'KMSKS' region signature appears at 266–270 (KMSKS). K269 contributes to the ATP binding site.

It belongs to the class-I aminoacyl-tRNA synthetase family. In terms of assembly, monomer. Requires Zn(2+) as cofactor.

It localises to the cytoplasm. The enzyme catalyses tRNA(Cys) + L-cysteine + ATP = L-cysteinyl-tRNA(Cys) + AMP + diphosphate. This Escherichia coli O157:H7 protein is Cysteine--tRNA ligase.